We begin with the raw amino-acid sequence, 212 residues long: Adenylate kinase (212 aa).

Position 10 to 15 (10 to 15 (GAGKGT)) interacts with ATP. The NMP stretch occupies residues 30–59 (ALGDIFRTIIKTSTSEAELINNYVKQGELV). AMP-binding positions include R36, 57 to 59 (ELV), 85 to 88 (GYPR), and Q92. The segment at 122–160 (GRYSCKNCRKIYNSYFLQPKTDNVCDVCGSSTFDYRKDD) is LID. R123 is an ATP binding site. Residues C126 and C129 each contribute to the Zn(2+) site. 132 to 133 (IY) provides a ligand contact to ATP. Zn(2+) is bound by residues C146 and C149. 2 residues coordinate AMP: R157 and R168. K196 lines the ATP pocket.

The protein belongs to the adenylate kinase family. Monomer.

Its subcellular location is the cytoplasm. The enzyme catalyses AMP + ATP = 2 ADP. It participates in purine metabolism; AMP biosynthesis via salvage pathway; AMP from ADP: step 1/1. Functionally, catalyzes the reversible transfer of the terminal phosphate group between ATP and AMP. Plays an important role in cellular energy homeostasis and in adenine nucleotide metabolism. The sequence is that of Adenylate kinase from Rickettsia akari (strain Hartford).